The chain runs to 530 residues: Growth-regulating factor 1 (530 aa).

Residues 1 to 41 are disordered; that stretch reads MDLGVRVSGHETVSSPGQTELGSGFSNKQERSGFDGEDCWR. The span at 11 to 27 shows a compositional bias: polar residues; that stretch reads ETVSSPGQTELGSGFSN. Residues 28–41 are compositionally biased toward basic and acidic residues; sequence KQERSGFDGEDCWR. The region spanning 133–168 is the QLQ domain; sequence PFSLTQWAELEQQALIYKYITANVPVPSSLLLSLKK. In terms of domain architecture, WRC spans 196–240; that stretch reads DPEPGRCRRTDGKKWRCSRDAVPDQKYCERHINRGRHRSRKPVEG. 2 consecutive short sequence motifs (bipartite nuclear localization signal) follow at residues 201–211 and 229–236; these read RCRRTDGKKWR and RGRHRSRK. Disordered stretches follow at residues 223 to 250 and 485 to 530; these read CERHINRGRHRSRKPVEGQNGHNTNAAA and STFG…APSL. Positions 485 to 508 are enriched in low complexity; it reads STFGSLSNSSSASSTIIGDNNNKN. The segment covering 519 to 530 has biased composition (polar residues); it reads TLMNTSATAPSL.

This sequence belongs to the GRF family. As to quaternary structure, interacts with GIF1 and GIF2. Strongly expressed in actively growing and developing tissues, such as roots, upper stems, and shoot tips containing the shoot apical meristem (SAM) and flower buds. Also expressed in mature flowers, but weakly expressed in mature stems and leaves.

The protein localises to the nucleus. Its function is as follows. Transcription activator that plays a role in the regulation of cell expansion in leaf and cotyledons tissues. Component of a network formed by miR396, the GRFs and their interacting factors (GIFs) acting in the regulation of meristem function, at least partially through the control of cell proliferation. microRNA396-GRF1/GRF3 regulatory module acts as a developmental regulator in the reprogramming of root cells during cyst nematode infection, leading to the formation of the syncytium. This is Growth-regulating factor 1 (GRF1) from Arabidopsis thaliana (Mouse-ear cress).